An 867-amino-acid chain; its full sequence is MTENKTVSSSSTRDDQTNIGLTCQEVKALREKAWSRTNEGNAMSQSLVLYGASKENSEGFHESKMTNTEGVNKGIYFSYPCRRHSCAVVNIPAPCVNKMISHIQDVESKIQEHLKRFETSFEEWSRTSSTKDLKEDWSVTTPVKEVKPGEKRDEKCPELKQEMETLLSEAIRLIKSLETDRADAEEALKQQRSRKNMINMKIDSWSVWKLQELPLAVQKEHEAYLSDVIELQWHLEDKANQLQHFEKQKTELEEANAKIQADIDYMNEHGPLLDSKQNQELQDLKNHYKKKMEVMDLHRKVNEELEEALEACENARLKAQQIKEEIDKDIYQDEKTIEAYKREIYQLNSLFDHYSSSVINVNTNIEEKEEEVTEAIRETKSSKNELHSLSKMLEDLRRVYDQLTWKQKSHENQYLEAVNDFYAAKKTWDIELSDVAKDFSAISLACTKLTEDNKKLEIDINKITVKTNESIRKKSKYESEIKYLTIMKLKNDKHLKNIYKEAYRIGTLFHLTKHKTDEMEDKIAEVRRKFKGREEFLKKLTQGEVAAGMVLQKKLYSIYEVQALERKELIKNRAICAMSLAELQEPLLQLEDEAERIRSLDKEHSVMLNNIIDQKDLIRRKVGKVKKKLRKKGKKTLDALIETESKRSAIFKDLEATKSKTMIFYAKINELNEELKAKEEEKKSFDQTLEILKNKFITMRFKREHAQTVFDHYMQEKKDCEERIFEEDQRFRVLLAVRQKTLQDTQKIIADSLEENLRLAQEYQQLQITFLKEKDNYFNIYDKQLSLDTSIRDKKQLCQLQRRMHTLWQEHFKLVVLFSQMRLANFQTDSQESIQKILAVQEESSNLMQHILGFFQTLTDGTCENDG.

4 coiled-coil regions span residues 153-204 (DEKC…KIDS), 233-414 (WHLE…ENQY), 445-470 (ACTK…TNES), and 662-696 (MIFY…KNKF).

This is Coiled-coil domain-containing protein 178 (CCDC178) from Homo sapiens (Human).